The sequence spans 197 residues: uncharacterized protein (197 aa).

Residues 1 to 23 (MSARAPKELRLALPPCLLNRTFA) form the signal peptide. N-linked (GlcNAc...) asparagine glycans are attached at residues asparagine 19 and asparagine 26. Residues 24 to 61 (SPNASGSGNTGARGPGAGGSGTCITQVGQQLFQSFSST) lie on the Extracellular side of the membrane. A helical transmembrane segment spans residues 62–82 (LVLIVLVTLIFCLIVLSLSTF). Residues 83–197 (HIHKRRMKKR…EGLLQTVVLS (115 aa)) are Cytoplasmic-facing. Positions 94-179 (MQRAQEEYER…ASSPQGAHAV (86 aa)) are disordered. 2 stretches are compositionally biased toward basic and acidic residues: residues 96–107 (RAQEEYERDHCS) and 125–136 (HAKETRLERQPR). Residues 147-161 (SSSSSSSPGLPCQGP) are compositionally biased toward low complexity. A compositionally biased stretch (pro residues) spans 162-171 (CAPPPPPPAS).

The protein resides in the membrane. This is an uncharacterized protein from Pongo abelii (Sumatran orangutan).